The following is a 134-amino-acid chain: Probable glycine cleavage system H protein (134 aa).

In terms of domain architecture, Lipoyl-binding spans 29–110 (TVLVGITDYA…PYENWIAKLK (82 aa)). Position 70 is an N6-lipoyllysine (Lys-70).

Belongs to the GcvH family. The glycine cleavage system is composed of four proteins: P, T, L and H. (R)-lipoate is required as a cofactor.

Functionally, the glycine cleavage system catalyzes the degradation of glycine. The H protein shuttles the methylamine group of glycine from the P protein to the T protein. The polypeptide is Probable glycine cleavage system H protein (Thermococcus gammatolerans (strain DSM 15229 / JCM 11827 / EJ3)).